The primary structure comprises 272 residues: Putative phosphoenolpyruvate synthase regulatory protein (272 aa).

ADP is bound at residue Gly152–Thr159.

The protein belongs to the pyruvate, phosphate/water dikinase regulatory protein family. PSRP subfamily.

It catalyses the reaction [pyruvate, water dikinase] + ADP = [pyruvate, water dikinase]-phosphate + AMP + H(+). The enzyme catalyses [pyruvate, water dikinase]-phosphate + phosphate + H(+) = [pyruvate, water dikinase] + diphosphate. In terms of biological role, bifunctional serine/threonine kinase and phosphorylase involved in the regulation of the phosphoenolpyruvate synthase (PEPS) by catalyzing its phosphorylation/dephosphorylation. The protein is Putative phosphoenolpyruvate synthase regulatory protein of Pseudomonas fluorescens (strain Pf0-1).